The following is a 1082-amino-acid chain: Importin-4 (1082 aa).

Met-1 carries the N-acetylmethionine modification. One can recognise an Importin N-terminal domain in the interval 24–90; sequence ATEQLQTILR…KSLVLTALQK (67 aa). HEAT repeat units lie at residues 348–385, 390–427, 431–471, 475–513, 896–933, and 937–975; these read KLCP…GAGD, RLLY…NLQP, SYSE…NLGP, PYLP…AAQD, QFVS…HGGC, and DHFP…ASPV.

It belongs to the importin beta family. As to quaternary structure, found in a cytosolic complex with ASF1 (ASF1A or ASF1B) and histones H3 and H4.

It localises to the cytoplasm. The protein localises to the nucleus. Functionally, nuclear transport receptor that mediates nuclear import of proteins, such as histones, RPS3A, TNP2 and VDR. Serves as receptor for nuclear localization signals (NLS) in cargo substrates. Is thought to mediate docking of the importin/substrate complex to the nuclear pore complex (NPC) through binding to nucleoporin and the complex is subsequently translocated through the pore by an energy requiring, Ran-dependent mechanism. At the nucleoplasmic side of the NPC, Ran binds to the importin, the importin/substrate complex dissociates and importin is re-exported from the nucleus to the cytoplasm where GTP hydrolysis releases Ran. The directionality of nuclear import is thought to be conferred by an asymmetric distribution of the GTP- and GDP-bound forms of Ran between the cytoplasm and nucleus. Mediates the nuclear import of the histone H3-H4 dimer when in complex with ASF1 (ASF1A or ASF1B). Mediates the ligand-independent nuclear import of vitamin D receptor (VDR). The sequence is that of Importin-4 (Ipo4) from Mus musculus (Mouse).